Consider the following 238-residue polypeptide: MHFEPALDCALLQKRYKRFLADVTYQSGDTGTIHCANTGAMTGCATPGDKVWYSTSNNTKRKYPHSWEITETQQGHLICVNTIRANQLTVEAIEQGWIKELSGYEQLQTEVKYGHENSRIDILLSASDRPACYIEVKSVTLLDDTEPGQGFFPDAVTTRGQKHLRELTEMAQNGSRAILLFAVLHSGIEKVAAALHIDAKYSQLLKQAQKAGVEVLCYKAEISNTEIKLNSAIAFNNS.

It belongs to the SfsA family.

In Vibrio vulnificus (strain YJ016), this protein is Sugar fermentation stimulation protein homolog.